Consider the following 1086-residue polypeptide: Selenocysteine insertion sequence-binding protein 2-like (1086 aa).

Disordered regions lie at residues 155 to 207 (GQAF…GPDS), 243 to 386 (AKGR…SESL), 615 to 657 (QEDA…SPMA), 880 to 904 (SDGL…KPSR), and 919 to 1086 (AAGS…PQST). The span at 193 to 206 (NVATQKETSATGPD) shows a compositional bias: polar residues. Serine 276 is modified (phosphoserine). 2 stretches are compositionally biased toward polar residues: residues 294 to 303 (GTMNRLESSG) and 328 to 344 (QAFS…NNLQ). Positions 355–370 (SSERRQNLQKRQDNKH) are enriched in basic and acidic residues. Over residues 624–657 (SDASLSPASQNSPYCMTPVSQGSPASSGIGSPMA) the composition is skewed to polar residues. Polar residues predominate over residues 922 to 931 (SITSAPSQGK). Residues 933-943 (TGDKDELKPDD) show a composition bias toward basic and acidic residues. Residues 947–957 (ASQQSTETGSL) show a composition bias toward polar residues. Residues 981–994 (LEEEEDEEEEEEDY) show a composition bias toward acidic residues. The segment covering 1004–1022 (QLNSRIESWVSETQRTMET) has biased composition (polar residues). Over residues 1032–1046 (SEEDSAEQSGEEAAE) the composition is skewed to acidic residues.

Binds SECIS (Sec insertion sequence) elements present on selenocysteine (Sec) protein mRNAs, but does not promote Sec incorporation into selenoproteins. This chain is Selenocysteine insertion sequence-binding protein 2-like (Secisbp2l), found in Mus musculus (Mouse).